The chain runs to 520 residues: DNA mismatch repair protein MutL (520 aa).

The protein belongs to the DNA mismatch repair MutL/HexB family.

Functionally, this protein is involved in the repair of mismatches in DNA. It is required for dam-dependent methyl-directed DNA mismatch repair. May act as a 'molecular matchmaker', a protein that promotes the formation of a stable complex between two or more DNA-binding proteins in an ATP-dependent manner without itself being part of a final effector complex. This chain is DNA mismatch repair protein MutL, found in Persephonella marina (strain DSM 14350 / EX-H1).